The following is a 227-amino-acid chain: Venom allergen 5 (227 aa).

The N-terminal stretch at Met1–Ala23 is a signal peptide. 4 disulfides stabilise this stretch: Cys27–Cys40, Cys31–Cys124, Cys49–Cys117, and Cys193–Cys210. Residues Leu68–Tyr212 enclose the SCP domain.

Belongs to the CRISP family. Venom allergen 5-like subfamily. In terms of tissue distribution, expressed by the venom gland.

Its subcellular location is the secreted. In Vespula maculifrons (Eastern yellow jacket), this protein is Venom allergen 5.